The primary structure comprises 391 residues: MSIVRMTDLDLSGKRVLIRQDLNVPIDNGQITSEQRITASVPTIKLALEKGAAVMVTSHLGRPKEGSWTEEDSLAPVATRLAALLGVDVPLVRDWVDGVEVAPGQVVLLENCRMNVGEGKDDETLARKYAALCDVFVMDAFGTAHRAQASTHGVIRFAPVAAGGPLLMAELDALAKALDNPAKPLLAIVAGSKVSTKLELLSNLVNKVDQLIVGGGIANTFIAAAGHAVGKSLNEPDLIPTANRIVADAKARGAEIPLPTDVVVAKQFLPDAQASVKSLDAVDADDLILDIGPQTAQRYAELIASAGTVVWNGPVGVFEFESFSHGTETLARAIASSKAFSIAGGGDTLAAVDKYDIAQDVTYISTGGGAFLEFLEGKTLPAVAALQARGQ.

Substrate is bound by residues 21–23 (DLN), arginine 36, 59–62 (HLGR), arginine 113, and arginine 146. ATP contacts are provided by residues lysine 197, glutamate 319, and 345–348 (GGDT).

This sequence belongs to the phosphoglycerate kinase family. In terms of assembly, monomer.

It is found in the cytoplasm. The enzyme catalyses (2R)-3-phosphoglycerate + ATP = (2R)-3-phospho-glyceroyl phosphate + ADP. The protein operates within carbohydrate degradation; glycolysis; pyruvate from D-glyceraldehyde 3-phosphate: step 2/5. This Xanthomonas axonopodis pv. citri (strain 306) protein is Phosphoglycerate kinase.